The sequence spans 501 residues: Pyruvate kinase (501 aa).

Position 50 (arginine 50) interacts with substrate. K(+)-binding residues include asparagine 52, serine 54, aspartate 85, and threonine 86. Position 52–55 (52–55) interacts with ATP; that stretch reads NFSH. ATP contacts are provided by arginine 92 and lysine 178. Glutamate 243 provides a ligand contact to Mg(2+). The substrate site is built by glycine 266, aspartate 267, and threonine 299. Aspartate 267 serves as a coordination point for Mg(2+).

The protein belongs to the pyruvate kinase family. As to quaternary structure, homotetramer. Mg(2+) serves as cofactor. It depends on K(+) as a cofactor.

The catalysed reaction is pyruvate + ATP = phosphoenolpyruvate + ADP + H(+). The protein operates within carbohydrate degradation; glycolysis; pyruvate from D-glyceraldehyde 3-phosphate: step 5/5. The chain is Pyruvate kinase (PYK1) from Lachancea kluyveri (strain ATCC 58438 / CBS 3082 / BCRC 21498 / NBRC 1685 / JCM 7257 / NCYC 543 / NRRL Y-12651) (Yeast).